Consider the following 363-residue polypeptide: Spermidine/putrescine import ATP-binding protein PotA (363 aa).

An ABC transporter domain is found at 6–236; it reads VEFKNVIKKY…PINHFVADFI (231 aa). Position 38-45 (38-45) interacts with ATP; the sequence is GPSGCGKT.

This sequence belongs to the ABC transporter superfamily. Spermidine/putrescine importer (TC 3.A.1.11.1) family. The complex is composed of two ATP-binding proteins (PotA), two transmembrane proteins (PotB and PotC) and a solute-binding protein (PotD).

The protein resides in the cell membrane. It carries out the reaction ATP + H2O + polyamine-[polyamine-binding protein]Side 1 = ADP + phosphate + polyamineSide 2 + [polyamine-binding protein]Side 1.. Its function is as follows. Part of the ABC transporter complex PotABCD involved in spermidine/putrescine import. Responsible for energy coupling to the transport system. The protein is Spermidine/putrescine import ATP-binding protein PotA of Latilactobacillus sakei subsp. sakei (strain 23K) (Lactobacillus sakei subsp. sakei).